We begin with the raw amino-acid sequence, 82 residues long: Translational regulator CsrA (82 aa).

It belongs to the CsrA/RsmA family. Homodimer; the beta-strands of each monomer intercalate to form a hydrophobic core, while the alpha-helices form wings that extend away from the core.

The protein resides in the cytoplasm. Functionally, a translational regulator that binds mRNA to regulate translation initiation and/or mRNA stability. Usually binds in the 5'-UTR at or near the Shine-Dalgarno sequence preventing ribosome-binding, thus repressing translation. Its main target seems to be the major flagellin gene, while its function is anatagonized by FliW. The protein is Translational regulator CsrA of Geobacillus sp. (strain WCH70).